Here is an 893-residue protein sequence, read N- to C-terminus: Serine/threonine-protein kinase/endoribonuclease IRE1 (893 aa).

The first 19 residues, 1 to 19, serve as a signal peptide directing secretion; sequence MRSLRRVLLQLVLLAGVAF. The Lumenal segment spans residues 20-379; the sequence is RGVRFDDAAD…NSVTKFSYRW (360 aa). Asn-105, Asn-158, Asn-259, and Asn-351 each carry an N-linked (GlcNAc...) asparagine glycan. The helical transmembrane segment at 380–397 threads the bilayer; that stretch reads LFPTFLMLLIMACLVKLA. Residues 398–893 lie on the Cytoplasmic side of the membrane; sequence DASKYCRQFV…FSKYFLGSSA (496 aa). The disordered stretch occupies residues 451–478; sequence ASDKEGNGTGGSTEAQSNKAHDSTNVEL. Residues 491–759 enclose the Protein kinase domain; it reads CVYSKEIGKG…AVYVMHHPFF (269 aa). ATP is bound by residues 497 to 505 and Lys-519; that span reads IGKGSNGTV. The active-site Proton acceptor is the Asp-625. The KEN domain occupies 762–890; sequence PELCLSFLRD…EEAFSKYFLG (129 aa).

This sequence belongs to the protein kinase superfamily. Ser/Thr protein kinase family. Homodimer; disulfide-linked. Dimer formation is driven by hydrophobic interactions within the N-terminal luminal domains and stabilized by disulfide bridges. In terms of processing, autophosphorylated. Expressed in roots, nodes, internodes, leaf sheaths, leaf blades, young ears and mature ears.

It localises to the endoplasmic reticulum membrane. The catalysed reaction is L-seryl-[protein] + ATP = O-phospho-L-seryl-[protein] + ADP + H(+). It carries out the reaction L-threonyl-[protein] + ATP = O-phospho-L-threonyl-[protein] + ADP + H(+). Its function is as follows. Involved in endoplasmic reticulum (ER) stress response. Senses unfolded proteins in the lumen of the ER via its N-terminal domain which leads to enzyme auto-activation. The active endoribonuclease domain splices bZIP50 mRNA to generate a new C-terminus, converting it into a potent unfolded-protein response (UPR) transcriptional activator, which then induces transcription of UPR target genes, such as luminal-binding protein (BiP) chaperones. The protein is Serine/threonine-protein kinase/endoribonuclease IRE1 of Oryza sativa subsp. japonica (Rice).